The chain runs to 282 residues: MADGEICRCQVTDPPLIRHEDYDCTARMVQKRIEIGPLGVLLNLNMLFHMSRVRHIDVYPYLNNIMSISVSLDVPVSSGVGVGRVRVLIFTTSRERVGIFHGWQVVPGCFLNAPCYSGVDVLSDELCEANITNTSVSSVAMFNGSYRPEDVWILLLTSSTCYGYHDVVVDIEQCTLPSNIDGCVCCSGVCYFNDNHCFCGRRDSNPFNPPCFQFIKDCNELYGTNETKQFICDLVGDDNLDSVNTLTKEGWRRFCDVLWNTTYGDVESRTFARFLWFVFYHD.

Its function is as follows. Involved in efficient vector transmission. Might slightly enhance symptom expression and increase root-specific silencing suppression (Potential). This Beet necrotic yellow vein virus (isolate Japan/S) (BNYVV) protein is 31 kDa protein (p31).